We begin with the raw amino-acid sequence, 256 residues long: Acetyl-coenzyme A carboxylase carboxyl transferase subunit alpha (256 aa).

The CoA carboxyltransferase C-terminal domain occupies 1–236 (MTDVARILKE…KSHLIDEITQ (236 aa)).

Belongs to the AccA family. Acetyl-CoA carboxylase is a heterohexamer composed of biotin carboxyl carrier protein (AccB), biotin carboxylase (AccC) and two subunits each of ACCase subunit alpha (AccA) and ACCase subunit beta (AccD).

It localises to the cytoplasm. The enzyme catalyses N(6)-carboxybiotinyl-L-lysyl-[protein] + acetyl-CoA = N(6)-biotinyl-L-lysyl-[protein] + malonyl-CoA. It functions in the pathway lipid metabolism; malonyl-CoA biosynthesis; malonyl-CoA from acetyl-CoA: step 1/1. Its function is as follows. Component of the acetyl coenzyme A carboxylase (ACC) complex. First, biotin carboxylase catalyzes the carboxylation of biotin on its carrier protein (BCCP) and then the CO(2) group is transferred by the carboxyltransferase to acetyl-CoA to form malonyl-CoA. The chain is Acetyl-coenzyme A carboxylase carboxyl transferase subunit alpha from Streptococcus equi subsp. equi (strain 4047).